The following is a 497-amino-acid chain: Ammonium transporter 1 (497 aa).

Topologically, residues 1–32 (MSSTTDATPTPSGVNGGDSMTVNLNQFYNNGD) are extracellular. A helical transmembrane segment spans residues 33–53 (VAWILTSTALVFIMIPGVGFF). Topologically, residues 54–63 (YSGLARRRSA) are cytoplasmic. A helical transmembrane segment spans residues 64–84 (ISMLFLSMMSVAIVAFQWFFW). Residues 85 to 122 (GYSLTFSHEGGPYIGSLANFGLRQTLGRPSSGASSVPD) lie on the Extracellular side of the membrane. A helical membrane pass occupies residues 123 to 143 (ILFCVFQGMFAAITPALAIGA). The Cytoplasmic segment spans residues 144-150 (AADRGRM). A helical membrane pass occupies residues 151–171 (FPCMVFMFLWTSIVYDPIAFW). Topologically, residues 172–187 (TWNPNGWLNKLGSYDF) are extracellular. A helical transmembrane segment spans residues 188–208 (AGGSPVHISSGMAALAYSIVI). Residues 209 to 223 (GKRCDHGTTKYRPHN) are Cytoplasmic-facing. A helical membrane pass occupies residues 224–244 (VPHVVLGTVFLWFGWFGFNGG). Topologically, residues 245-253 (SSAAANMRG) are extracellular. A helical membrane pass occupies residues 254 to 274 (VMAVVVTHLAASVGGIVWCVI). Over 275-281 (DFAKNRH) the chain is Cytoplasmic. Residues 282 to 302 (WSVVGFCEGAVAGLVAITPGS) form a helical membrane-spanning segment. Position 303 (Gly-303) is a topological domain, extracellular. A helical membrane pass occupies residues 304-324 (FVPPWAAVVIGALGAVFCYAA). Topologically, residues 325–338 (TYLKKIIRVDDALD) are cytoplasmic. The chain crosses the membrane as a helical span at residues 339 to 359 (IFAEHGVGGMVGNILTALFAA). Residues 360 to 394 (DYIEALDGSGTAYTGGWITHHYIQLGYQLADTVSC) lie on the Extracellular side of the membrane. A helical transmembrane segment spans residues 395–415 (AAYSFAVSCALLFVMNYIPGL). The Cytoplasmic segment spans residues 416 to 497 (SLRVSREDEV…AESEAQAPAI (82 aa)). The disordered stretch occupies residues 440 to 497 (YKDSTDEPPPITTSGVQYTSPTVSDSASNEKEQEHRAQNEAQKEEEYRAESEAQAPAI). Over residues 451-466 (TTSGVQYTSPTVSDSA) the composition is skewed to polar residues. Positions 467 to 490 (SNEKEQEHRAQNEAQKEEEYRAES) are enriched in basic and acidic residues.

It belongs to the ammonia transporter channel (TC 1.A.11.2) family.

The protein resides in the membrane. Transporter for ammonium to use as a nitrogen source. Under ammonium limitation acts as an ammonium sensor, generating a signal that leads to pseudohyphal growth. In Schizosaccharomyces pombe (strain 972 / ATCC 24843) (Fission yeast), this protein is Ammonium transporter 1 (amt1).